A 430-amino-acid chain; its full sequence is Dihydrolipoyllysine-residue acetyltransferase component of pyruvate dehydrogenase complex (430 aa).

The region spanning 2-77 (AFEFRLPDIG…VVGDVIVKID (76 aa)) is the Lipoyl-binding domain. Lys43 is modified (N6-lipoyllysine). Positions 80–122 (DAEDMQFKGHDDDSSSKEEPAKEEAPAEQAPVATQTEEVDENR) are disordered. Basic and acidic residues predominate over residues 84–104 (MQFKGHDDDSSSKEEPAKEEA). Residues 125–162 (KAMPSVRKYAREKGVNIKAVSGSGKNGRITKEDVDAYL) enclose the Peripheral subunit-binding (PSBD) domain. The segment at 164–200 (GGAPTASNESADSATNEEVAETPAAPAAVSLEGDFPE) is disordered. The span at 177 to 192 (ATNEEVAETPAAPAAV) shows a compositional bias: low complexity. His401 is a catalytic residue.

The protein belongs to the 2-oxoacid dehydrogenase family. As to quaternary structure, forms a 24-polypeptide structural core with octahedral symmetry. It depends on (R)-lipoate as a cofactor.

The enzyme catalyses N(6)-[(R)-dihydrolipoyl]-L-lysyl-[protein] + acetyl-CoA = N(6)-[(R)-S(8)-acetyldihydrolipoyl]-L-lysyl-[protein] + CoA. The pyruvate dehydrogenase complex catalyzes the overall conversion of pyruvate to acetyl-CoA and CO(2). It contains multiple copies of three enzymatic components: pyruvate dehydrogenase (E1), dihydrolipoamide acetyltransferase (E2) and lipoamide dehydrogenase (E3). This chain is Dihydrolipoyllysine-residue acetyltransferase component of pyruvate dehydrogenase complex (pdhC), found in Staphylococcus aureus.